A 457-amino-acid polypeptide reads, in one-letter code: tRNA modification GTPase MnmE (457 aa).

(6S)-5-formyl-5,6,7,8-tetrahydrofolate-binding residues include arginine 25, glutamate 87, and arginine 126. One can recognise a TrmE-type G domain in the interval 223 to 377; it reads GISTAIIGRP…IEERINNLFF (155 aa). Asparagine 233 is a K(+) binding site. GTP-binding positions include 233–238, 252–258, and 277–280; these read NVGKSS, TDIAGTT, and DTAG. Position 237 (serine 237) interacts with Mg(2+). 3 residues coordinate K(+): threonine 252, isoleucine 254, and threonine 257. A Mg(2+)-binding site is contributed by threonine 258. Lysine 457 contacts (6S)-5-formyl-5,6,7,8-tetrahydrofolate.

It belongs to the TRAFAC class TrmE-Era-EngA-EngB-Septin-like GTPase superfamily. TrmE GTPase family. Homodimer. Heterotetramer of two MnmE and two MnmG subunits. The cofactor is K(+).

The protein localises to the cytoplasm. Functionally, exhibits a very high intrinsic GTPase hydrolysis rate. Involved in the addition of a carboxymethylaminomethyl (cmnm) group at the wobble position (U34) of certain tRNAs, forming tRNA-cmnm(5)s(2)U34. This Streptococcus pneumoniae serotype 4 (strain ATCC BAA-334 / TIGR4) protein is tRNA modification GTPase MnmE.